A 735-amino-acid chain; its full sequence is Translation initiation factor IF-2, chloroplastic (735 aa).

The 173-residue stretch at Arg239 to Tyr411 folds into the tr-type G domain. Residues Gly248–Thr255 form a G1 region. Gly248–Thr255 provides a ligand contact to GTP. The interval Gly273 to Lys277 is G2. Positions Asp298–Gly301 are G3. Residues Asp298–His302 and Asn352–Asp355 contribute to the GTP site. Positions Asn352–Asp355 are G4. Residues Ser388–Ser390 form a G5 region.

The protein belongs to the TRAFAC class translation factor GTPase superfamily. Classic translation factor GTPase family. IF-2 subfamily.

The protein resides in the plastid. Its subcellular location is the chloroplast. Functionally, one of the essential components for the initiation of protein synthesis. Protects formylmethionyl-tRNA from spontaneous hydrolysis and promotes its binding to the 30S ribosomal subunits. Also involved in the hydrolysis of GTP during the formation of the 70S ribosomal complex. The protein is Translation initiation factor IF-2, chloroplastic (infB) of Guillardia theta (Cryptophyte).